Consider the following 278-residue polypeptide: Soluble NSF attachment protein homolog FPV011 (278 aa).

It belongs to the SNAP family.

The sequence is that of Soluble NSF attachment protein homolog FPV011 from Fowlpox virus (strain NVSL) (FPV).